The chain runs to 322 residues: Ribose-phosphate pyrophosphokinase 1 (322 aa).

ATP-binding positions include 39-41 and 98-99; these read DGE and RQ. Positions 132 and 173 each coordinate Mg(2+). Residue K196 is part of the active site. Residues R198, D224, and 228–232 contribute to the D-ribose 5-phosphate site; that span reads DTAGT.

The protein belongs to the ribose-phosphate pyrophosphokinase family. Class I subfamily. In terms of assembly, homohexamer. The cofactor is Mg(2+).

The protein localises to the cytoplasm. The catalysed reaction is D-ribose 5-phosphate + ATP = 5-phospho-alpha-D-ribose 1-diphosphate + AMP + H(+). The protein operates within metabolic intermediate biosynthesis; 5-phospho-alpha-D-ribose 1-diphosphate biosynthesis; 5-phospho-alpha-D-ribose 1-diphosphate from D-ribose 5-phosphate (route I): step 1/1. Involved in the biosynthesis of the central metabolite phospho-alpha-D-ribosyl-1-pyrophosphate (PRPP) via the transfer of pyrophosphoryl group from ATP to 1-hydroxyl of ribose-5-phosphate (Rib-5-P). The protein is Ribose-phosphate pyrophosphokinase 1 of Streptococcus mutans serotype c (strain ATCC 700610 / UA159).